Here is a 350-residue protein sequence, read N- to C-terminus: Glyoxylate reductase 1 (350 aa).

Residue T31 is modified to Phosphothreonine. NAD(+) contacts are provided by residues 173–174 (RI), 252–254 (TAR), and D278. R254 is a catalytic residue. The active site involves E283. The active-site Proton donor is the H301. Residue 301 to 304 (HMGT) coordinates NAD(+).

The protein belongs to the D-isomer specific 2-hydroxyacid dehydrogenase family.

Its subcellular location is the cytoplasm. It is found in the nucleus. The protein resides in the mitochondrion. The enzyme catalyses glycolate + NAD(+) = glyoxylate + NADH + H(+). It catalyses the reaction glycolate + NADP(+) = glyoxylate + NADPH + H(+). The catalysed reaction is (R)-glycerate + NAD(+) = 3-hydroxypyruvate + NADH + H(+). It carries out the reaction (R)-glycerate + NADP(+) = 3-hydroxypyruvate + NADPH + H(+). Its function is as follows. Glyoxylate reductase that reversibly reduces glyoxylate to glycolate, or alternatively hydroxypyruvate to D-glycerate, using either NADPH or NADH as a cosubstrate. Does not act as a hydroxyisocaproate dehydrogenase even though it also has minor activity on alpha-ketoisocaproate. In Saccharomyces cerevisiae (strain ATCC 204508 / S288c) (Baker's yeast), this protein is Glyoxylate reductase 1.